Reading from the N-terminus, the 431-residue chain is Polyprenol-phosphate-mannose-dependent alpha-(1-2)-phosphatidylinositol pentamannoside mannosyltransferase (431 aa).

The next 10 membrane-spanning stretches (helical) occupy residues 43-63 (AAVL…YLAP), 108-128 (FAAV…ALLW), 148-168 (GGTA…AIWI), 175-195 (FDYG…VYTP), 202-222 (LLVG…VYLV), 229-249 (AAAF…LVVG), 290-310 (GFGP…ILAW), 332-352 (LSPI…IWLI), 364-384 (ILGW…LSFA), and 397-417 (LAWA…WIAA).

Belongs to the glycosyltransferase 87 family.

It localises to the cell membrane. It functions in the pathway phospholipid metabolism; phosphatidylinositol metabolism. Catalyzes the alpha-1,2 addition of a mannose residue from polyprenol-phosphate-mannose (PPM) to a monoacyl phosphatidylinositol tetramannoside (AcPIM4) to generate a monoacyl phosphatidylinositol pentamannoside (AcPIM5). This is Polyprenol-phosphate-mannose-dependent alpha-(1-2)-phosphatidylinositol pentamannoside mannosyltransferase (pimE) from Mycobacterium tuberculosis (strain CDC 1551 / Oshkosh).